We begin with the raw amino-acid sequence, 151 residues long: Probable cellulase Cel12b (151 aa).

Residues glutamate 50 and glutamate 133 contribute to the active site.

The protein belongs to the glycosyl hydrolase 12 (cellulase H) family.

Probable cellulase. Can hydrolyze barley beta-glucan in vitro. Could be important for the survival of M.tuberculosis in the environment, perhaps in amoebal hosts. This is Probable cellulase Cel12b from Mycobacterium tuberculosis (strain ATCC 25618 / H37Rv).